The sequence spans 346 residues: Annexin A1 (346 aa).

Ser5 bears the Phosphoserine; by TRPM7 mark. Gln19 participates in a covalent cross-link: Isoglutamyl lysine isopeptide (Gln-Lys) (interchain with K-?). Phosphotyrosine; by EGFR is present on Tyr21. Ser34 and Ser37 each carry phosphoserine. 4 Annexin repeats span residues 42 to 113 (FNPS…ALLK), 114 to 185 (TPAR…SLAK), 197 to 269 (DLAD…AIVK), and 273 to 344 (SKPM…ALCG). At Lys58 the chain carries N6-acetyllysine. Residues Gly59, Val60, Glu62, Lys97, Leu100, Glu105, Met127, Gly129, Gly131, Thr132, and Glu134 each contribute to the Ca(2+) site. A Phosphothreonine modification is found at Thr136. Asp171, Gly210, and Arg213 together coordinate Ca(2+). A Glycyl lysine isopeptide (Lys-Gly) (interchain with G-Cter in SUMO1); alternate cross-link involves residue Lys214. Lys214 participates in a covalent cross-link: Glycyl lysine isopeptide (Lys-Gly) (interchain with G-Cter in SUMO2); alternate. Gly215, Asp253, Glu255, and Met256 together coordinate Ca(2+). Residue Lys257 forms a Glycyl lysine isopeptide (Lys-Gly) (interchain with G-Cter in SUMO1) linkage. Ca(2+)-binding residues include Glu261, Met286, Gly288, and Gly290. Lys312 is subject to N6-acetyllysine. Cysteines 324 and 343 form a disulfide. Residues Leu328, Glu330, and Thr331 each contribute to the Ca(2+) site. Residue Lys332 forms a Glycyl lysine isopeptide (Lys-Gly) (interchain with G-Cter in SUMO1) linkage. Ca(2+) is bound at residue Glu336.

It belongs to the annexin family. Homodimer; non-covalently linked. Homodimer; linked by transglutamylation. Homodimers linked by transglutamylation are observed in placenta, but not in other tissues. Interacts with S100A11. Heterotetramer, formed by two molecules each of S100A11 and ANXA1. Interacts with DYSF. Interacts with EGFR. Phosphorylated by protein kinase C, EGFR and TRPM7. Phosphorylated in response to EGF treatment. Post-translationally, sumoylated. In terms of processing, proteolytically cleaved by cathepsin CTSG to release the active N-terminal peptide Ac2-26.

Its subcellular location is the nucleus. The protein localises to the cytoplasm. The protein resides in the cell projection. It is found in the cilium. It localises to the basolateral cell membrane. Its subcellular location is the lateral cell membrane. The protein localises to the cell membrane. The protein resides in the apical cell membrane. It is found in the membrane. It localises to the early endosome. Its subcellular location is the cytoplasmic vesicle membrane. The protein localises to the endosome membrane. The protein resides in the secreted. It is found in the extracellular space. It localises to the extracellular exosome. Its subcellular location is the cytoplasmic vesicle. The protein localises to the secretory vesicle lumen. The protein resides in the phagocytic cup. In terms of biological role, plays important roles in the innate immune response as effector of glucocorticoid-mediated responses and regulator of the inflammatory process. Has anti-inflammatory activity. Plays a role in glucocorticoid-mediated down-regulation of the early phase of the inflammatory response. Contributes to the adaptive immune response by enhancing signaling cascades that are triggered by T-cell activation, regulates differentiation and proliferation of activated T-cells. Promotes the differentiation of T-cells into Th1 cells and negatively regulates differentiation into Th2 cells. Has no effect on unstimulated T-cells. Negatively regulates hormone exocytosis via activation of the formyl peptide receptors and reorganization of the actin cytoskeleton. Has high affinity for Ca(2+) and can bind up to eight Ca(2+) ions. Displays Ca(2+)-dependent binding to phospholipid membranes. Plays a role in the formation of phagocytic cups and phagosomes. Plays a role in phagocytosis by mediating the Ca(2+)-dependent interaction between phagosomes and the actin cytoskeleton. Functions at least in part by activating the formyl peptide receptors and downstream signaling cascades. Promotes chemotaxis of granulocytes and monocytes via activation of the formyl peptide receptors. Promotes rearrangement of the actin cytoskeleton, cell polarization and cell migration. Promotes resolution of inflammation and wound healing. Acts via neutrophil N-formyl peptide receptors to enhance the release of CXCL2. This is Annexin A1 (ANXA1) from Equus caballus (Horse).